The sequence spans 87 residues: Small ribosomal subunit protein uS15c (87 aa).

Belongs to the universal ribosomal protein uS15 family. In terms of assembly, part of the 30S ribosomal subunit.

It localises to the plastid. The protein localises to the chloroplast. The chain is Small ribosomal subunit protein uS15c (rps15) from Solanum lycopersicum (Tomato).